Here is a 116-residue protein sequence, read N- to C-terminus: Large ribosomal subunit protein bL17 (116 aa).

The protein belongs to the bacterial ribosomal protein bL17 family. Part of the 50S ribosomal subunit. Contacts protein L32.

This is Large ribosomal subunit protein bL17 from Picosynechococcus sp. (strain ATCC 27264 / PCC 7002 / PR-6) (Agmenellum quadruplicatum).